The following is a 67-amino-acid chain: Large ribosomal subunit protein bL35 (67 aa).

This sequence belongs to the bacterial ribosomal protein bL35 family.

The sequence is that of Large ribosomal subunit protein bL35 from Synechocystis sp. (strain ATCC 27184 / PCC 6803 / Kazusa).